A 449-amino-acid polypeptide reads, in one-letter code: Adenylosuccinate synthetase (449 aa).

Residues 12–18 and 40–42 each bind GTP; these read GDEGKGK and GHT. The Proton acceptor role is filled by Asp-13. Mg(2+) contacts are provided by Asp-13 and Gly-40. IMP-binding positions include 13–16, 38–41, Thr-128, Arg-142, Gln-223, Thr-238, and Arg-302; these read DEGK and NAGH. The active-site Proton donor is His-41. Substrate is bound at residue 298–304; the sequence is TTTGRRR. GTP contacts are provided by residues Arg-304, 330 to 332, and 412 to 414; these read KLD and SLG.

It belongs to the adenylosuccinate synthetase family. As to quaternary structure, homodimer. Mg(2+) serves as cofactor.

The protein localises to the cytoplasm. It carries out the reaction IMP + L-aspartate + GTP = N(6)-(1,2-dicarboxyethyl)-AMP + GDP + phosphate + 2 H(+). It participates in purine metabolism; AMP biosynthesis via de novo pathway; AMP from IMP: step 1/2. In terms of biological role, plays an important role in the de novo pathway of purine nucleotide biosynthesis. Catalyzes the first committed step in the biosynthesis of AMP from IMP. The sequence is that of Adenylosuccinate synthetase from Gloeothece citriformis (strain PCC 7424) (Cyanothece sp. (strain PCC 7424)).